Reading from the N-terminus, the 912-residue chain is Coiled-coil domain-containing protein 162 (912 aa).

Coiled coils occupy residues methionine 1–alanine 35 and valine 220–serine 276.

The sequence is that of Coiled-coil domain-containing protein 162 from Mus musculus (Mouse).